We begin with the raw amino-acid sequence, 151 residues long: MESPIKFEEVDIATILKTLPHRYPFLLIDRVINIRADHSGIGVKNVTINEPAFQGHFPERPVYPGVLMIEGMAQTAGVIGITSVEGTEKPRAVYFLTIDKCKFRKPVMPGDIVEYHMRSIGRRKTMWWFHGDAKVNGATVAEADVGAMLTD.

Histidine 56 is a catalytic residue.

It belongs to the thioester dehydratase family. FabZ subfamily.

Its subcellular location is the cytoplasm. It carries out the reaction a (3R)-hydroxyacyl-[ACP] = a (2E)-enoyl-[ACP] + H2O. Involved in unsaturated fatty acids biosynthesis. Catalyzes the dehydration of short chain beta-hydroxyacyl-ACPs and long chain saturated and unsaturated beta-hydroxyacyl-ACPs. This is 3-hydroxyacyl-[acyl-carrier-protein] dehydratase FabZ from Nitrobacter hamburgensis (strain DSM 10229 / NCIMB 13809 / X14).